The chain runs to 705 residues: tRNA 5-methylaminomethyl-2-thiouridine biosynthesis bifunctional protein MnmC (705 aa).

Residues 1-241 (MTIKTADIQF…KREMLAGIIA (241 aa)) are tRNA (mnm(5)s(2)U34)-methyltransferase. Residues 289–705 (IGAGIAGASM…LIRQLIRREV (417 aa)) are FAD-dependent cmnm(5)s(2)U34 oxidoreductase.

In the N-terminal section; belongs to the methyltransferase superfamily. tRNA (mnm(5)s(2)U34)-methyltransferase family. The protein in the C-terminal section; belongs to the DAO family. Requires FAD as cofactor.

The protein resides in the cytoplasm. It catalyses the reaction 5-aminomethyl-2-thiouridine(34) in tRNA + S-adenosyl-L-methionine = 5-methylaminomethyl-2-thiouridine(34) in tRNA + S-adenosyl-L-homocysteine + H(+). Its function is as follows. Catalyzes the last two steps in the biosynthesis of 5-methylaminomethyl-2-thiouridine (mnm(5)s(2)U) at the wobble position (U34) in tRNA. Catalyzes the FAD-dependent demodification of cmnm(5)s(2)U34 to nm(5)s(2)U34, followed by the transfer of a methyl group from S-adenosyl-L-methionine to nm(5)s(2)U34, to form mnm(5)s(2)U34. The sequence is that of tRNA 5-methylaminomethyl-2-thiouridine biosynthesis bifunctional protein MnmC from Pseudoalteromonas atlantica (strain T6c / ATCC BAA-1087).